Here is a 670-residue protein sequence, read N- to C-terminus: DNA ligase (670 aa).

NAD(+) contacts are provided by residues 32–36 (DAYYD), 81–82 (SL), and Glu110. Lys112 (N6-AMP-lysine intermediate) is an active-site residue. 4 residues coordinate NAD(+): Arg133, Glu170, Lys289, and Lys313. Zn(2+) is bound by residues Cys407, Cys410, Cys425, and Cys431. The region spanning 590–670 (EDELRLKGQT…ELLVFLGLAG (81 aa)) is the BRCT domain.

It belongs to the NAD-dependent DNA ligase family. LigA subfamily. Requires Mg(2+) as cofactor. It depends on Mn(2+) as a cofactor.

It carries out the reaction NAD(+) + (deoxyribonucleotide)n-3'-hydroxyl + 5'-phospho-(deoxyribonucleotide)m = (deoxyribonucleotide)n+m + AMP + beta-nicotinamide D-nucleotide.. Functionally, DNA ligase that catalyzes the formation of phosphodiester linkages between 5'-phosphoryl and 3'-hydroxyl groups in double-stranded DNA using NAD as a coenzyme and as the energy source for the reaction. It is essential for DNA replication and repair of damaged DNA. The protein is DNA ligase of Shewanella denitrificans (strain OS217 / ATCC BAA-1090 / DSM 15013).